Reading from the N-terminus, the 262-residue chain is Deaminated glutathione amidase (262 aa).

Positions 1 to 238 constitute a CN hydrolase domain; it reads MLVAAGQFAV…PALIMAEVTP (238 aa). The Proton acceptor role is filled by E40. K110 serves as the catalytic Proton donor. Residue C147 is the Nucleophile of the active site.

Belongs to the carbon-nitrogen hydrolase superfamily. NIT1/NIT2 family.

The enzyme catalyses N-(4-oxoglutaryl)-L-cysteinylglycine + H2O = L-cysteinylglycine + 2-oxoglutarate. Functionally, hydrolyzes deaminated glutathione (dGSH) to 2-oxoglutarate and L-cysteinylglycine, and no activity on glutathione or L-glutamine. May function as a metabolite repair enzyme. This is Deaminated glutathione amidase (ybeM) from Escherichia coli O157:H7.